Consider the following 506-residue polypeptide: Ribose import ATP-binding protein RbsA 1 (506 aa).

2 consecutive ABC transporter domains span residues 5–241 (LALT…VGRR) and 254–498 (RDAA…TSDA). 37-44 (GENGAGKS) serves as a coordination point for ATP.

Belongs to the ABC transporter superfamily. Ribose importer (TC 3.A.1.2.1) family. The complex is composed of an ATP-binding protein (RbsA), two transmembrane proteins (RbsC) and a solute-binding protein (RbsB).

The protein resides in the cell inner membrane. The catalysed reaction is D-ribose(out) + ATP + H2O = D-ribose(in) + ADP + phosphate + H(+). Part of the ABC transporter complex RbsABC involved in ribose import. Responsible for energy coupling to the transport system. In Burkholderia thailandensis (strain ATCC 700388 / DSM 13276 / CCUG 48851 / CIP 106301 / E264), this protein is Ribose import ATP-binding protein RbsA 1.